A 440-amino-acid chain; its full sequence is ATP-dependent protease ATPase subunit HslU (440 aa).

ATP is bound by residues isoleucine 18, 60–65, aspartate 253, glutamate 318, and arginine 390; that span reads GVGKTE.

It belongs to the ClpX chaperone family. HslU subfamily. As to quaternary structure, a double ring-shaped homohexamer of HslV is capped on each side by a ring-shaped HslU homohexamer. The assembly of the HslU/HslV complex is dependent on binding of ATP.

Its subcellular location is the cytoplasm. Its function is as follows. ATPase subunit of a proteasome-like degradation complex; this subunit has chaperone activity. The binding of ATP and its subsequent hydrolysis by HslU are essential for unfolding of protein substrates subsequently hydrolyzed by HslV. HslU recognizes the N-terminal part of its protein substrates and unfolds these before they are guided to HslV for hydrolysis. This Shewanella oneidensis (strain ATCC 700550 / JCM 31522 / CIP 106686 / LMG 19005 / NCIMB 14063 / MR-1) protein is ATP-dependent protease ATPase subunit HslU.